The sequence spans 821 residues: MAQNSKYEAAKIEKKWQEIWHKNGEFEPKDDYTLPKKYILSMFPYPSGRIHMGHVRNYSIGDALARYYRKNCFNVLHPIGFDSFGMPAENAAIKHKIHPKKWTYENIDYMKKELSSLGFSFSDRRMLATSDPLYTKWEQSFFIKMFEKGLVYRKSAIVNWCEHDQTVLANEQVEDGCCWRCGNEVVQREFPGYYFKITQYAEELLNDLKTLEGKWPNQVIAMQENWIGKSSGLEFKFYLDDASSRALGGKFDGFEVFTTRPDTIYGVSYVALAPEHKVVRALLSSEILDDTKKAKIKSILNQSPRERQASDKDGVFLDIYMLHPLTNEPVPVWVANFILADYGSGAIMAVPAHDQRDYEFASKFGLPIKQVVMPKEGKFDTSKANAEYGISINSPLINGLETKQAKQAIIEKFEKDGLGKRITNYKLRDWGISRQRYWGAPIPIVHCPNCGVVPENEQNLPIALPDDVVITGEGNPLDKHPTWKYTKCPKCGHDAVRETDTMDTFVESSWYFARFASDEKTWQQTAFDKKSVDYWMSVDQYIGGIEHAILHLLYARFFQKVLRDLGYLRDDEPFSNLLTQGMVLKDGKKMSKSKGNVVDPDDIINRYGADTARLFILFAAPPQKELEWNDSAVEGAYRFLNRLWDKAKTIKKSEILPAIEHANLNKDEKYARMKVYEALKKSNEVFNETFAFNTLIAACMEALNALNAQDNDDVNTEGFFIILNLLEPIVPHIANELSEELFRRKNFTKLEILEEVFVKDTINLAVTVNGKKRAEFEISADASEADVLQTAKASVAKWIEGKEIIKEIYIKGKLVNLVVKG.

The short motif at 44–54 (PYPSGRIHMGH) is the 'HIGH' region element. Positions 589–593 (KMSKS) match the 'KMSKS' region motif. Lys592 is a binding site for ATP.

Belongs to the class-I aminoacyl-tRNA synthetase family.

Its subcellular location is the cytoplasm. It carries out the reaction tRNA(Leu) + L-leucine + ATP = L-leucyl-tRNA(Leu) + AMP + diphosphate. The sequence is that of Leucine--tRNA ligase from Campylobacter curvus (strain 525.92).